Here is a 123-residue protein sequence, read N- to C-terminus: uncharacterized protein (123 aa).

The disordered stretch occupies residues 100–123 (NKQPKTTHHFSTNSSEYKSRKSKH).

This is an uncharacterized protein from Acanthamoeba polyphaga mimivirus (APMV).